A 1014-amino-acid chain; its full sequence is Isoleucine--tRNA ligase (1014 aa).

Positions 48 to 58 match the 'HIGH' region motif; that stretch reads PTANGRPGIHH. The 'KMSKS' region motif lies at 628 to 632; sequence KMSKS. Lys631 contacts ATP.

It belongs to the class-I aminoacyl-tRNA synthetase family. IleS type 2 subfamily. In terms of assembly, monomer. Requires Zn(2+) as cofactor.

Its subcellular location is the cytoplasm. The catalysed reaction is tRNA(Ile) + L-isoleucine + ATP = L-isoleucyl-tRNA(Ile) + AMP + diphosphate. In terms of biological role, catalyzes the attachment of isoleucine to tRNA(Ile). As IleRS can inadvertently accommodate and process structurally similar amino acids such as valine, to avoid such errors it has two additional distinct tRNA(Ile)-dependent editing activities. One activity is designated as 'pretransfer' editing and involves the hydrolysis of activated Val-AMP. The other activity is designated 'posttransfer' editing and involves deacylation of mischarged Val-tRNA(Ile). The polypeptide is Isoleucine--tRNA ligase (Dehalococcoides mccartyi (strain CBDB1)).